The chain runs to 262 residues: Triosephosphate isomerase (262 aa).

9 to 11 provides a ligand contact to substrate; it reads NWK. H99 serves as the catalytic Electrophile. The Proton acceptor role is filled by E171. Substrate is bound by residues G177 and S216.

This sequence belongs to the triosephosphate isomerase family. Homodimer.

It localises to the cytoplasm. It catalyses the reaction D-glyceraldehyde 3-phosphate = dihydroxyacetone phosphate. The protein operates within carbohydrate biosynthesis; gluconeogenesis. Its pathway is carbohydrate degradation; glycolysis; D-glyceraldehyde 3-phosphate from glycerone phosphate: step 1/1. In terms of biological role, involved in the gluconeogenesis. Catalyzes stereospecifically the conversion of dihydroxyacetone phosphate (DHAP) to D-glyceraldehyde-3-phosphate (G3P). This Blochmanniella floridana protein is Triosephosphate isomerase.